A 147-amino-acid chain; its full sequence is Sentan (147 aa).

The tract at residues R14–M34 is disordered. Positions P25 to M34 are enriched in polar residues.

Belongs to the S-100 family.

The protein resides in the cell projection. It is found in the cilium. May be a component of the linker structure that bridges the ciliary membrane and peripheral singlet microtubules. This is Sentan (SNTN) from Bos taurus (Bovine).